A 768-amino-acid polypeptide reads, in one-letter code: Multidomain esterase (768 aa).

Positions 1–40 (MKKHFVVGETIKRFLRIGTSLALSISTLSLLPSAPRLSSA) are cleaved as a signal peptide. The interval 41–264 (AGTIKIMPLG…YWLEQIEGYL (224 aa)) is acetylxylan esterase. The active-site Nucleophile; for acetylxylan esterase activity is Ser-68. Active-site for acetylxylan esterase activity residues include Asp-240 and His-243. Residues 267–283 (SDGPQQTQPTQPSQGDS) are compositionally biased toward low complexity. A disordered region spans residues 267-289 (SDGPQQTQPTQPSQGDSGPELIY). Residues 285-352 (PELIYGDLDG…IIGKIKEFTV (68 aa)) form the Dockerin domain. The glucuronoyl esterase stretch occupies residues 353 to 768 (AEKTVTEKPV…ADTFASKWLY (416 aa)). Positions 563–568 (GVSRYG) match the GXSYXG catalytic site motif motif. Catalysis depends on Ser-565, which acts as the Nucleophile; for glucuronoyl esterase activity. Positions 569, 633, and 679 each coordinate substrate.

It in the N-terminal section; belongs to the carbohydrate esterase 3 (CE3) family. The protein in the C-terminal section; belongs to the carbohydrate esterase 15 (CE15) family.

The protein resides in the secreted. It catalyses the reaction Deacetylation of xylans and xylo-oligosaccharides.. The enzyme catalyses a 4-O-methyl-alpha-D-glucuronosyl ester derivative + H2O = 4-O-methyl-alpha-D-glucuronate derivative + an alcohol + H(+). It functions in the pathway glycan degradation; xylan degradation. In terms of biological role, esterase involved in the degradation of plant cell wall polysaccharides. Catalyzes the deacetylation of chemically acetylated xylan and native, steam-extracted xylan. Seems to act in synergy with the xylanase XynD which produces xylo-oligosaccharides. Also catalyzes the deesterification of methyl esters of 4-O-methyl-D-glucuronic acid (MeGlcA) side residues in synthetic glucuronoxylan methyl ester, suggesting that it may be able to cleave ester linkages between MeGlcA carboxyl and more complex alcohols, including linkages between hemicellulose and lignin alcohols in plant cell walls. The protein is Multidomain esterase of Ruminococcus flavefaciens.